Here is a 159-residue protein sequence, read N- to C-terminus: Ribosomal RNA large subunit methyltransferase H (159 aa).

S-adenosyl-L-methionine is bound by residues Leu76, Gly108, and 127 to 132 (FGLLTL).

It belongs to the RNA methyltransferase RlmH family. In terms of assembly, homodimer.

It is found in the cytoplasm. It carries out the reaction pseudouridine(1915) in 23S rRNA + S-adenosyl-L-methionine = N(3)-methylpseudouridine(1915) in 23S rRNA + S-adenosyl-L-homocysteine + H(+). Its function is as follows. Specifically methylates the pseudouridine at position 1915 (m3Psi1915) in 23S rRNA. The polypeptide is Ribosomal RNA large subunit methyltransferase H (Streptococcus equi subsp. zooepidemicus (strain H70)).